The chain runs to 466 residues: Soluble pyridine nucleotide transhydrogenase (466 aa).

Residue 36 to 45 (ERYHNIGGGC) participates in FAD binding.

It belongs to the class-I pyridine nucleotide-disulfide oxidoreductase family. FAD serves as cofactor.

The protein localises to the cytoplasm. The catalysed reaction is NAD(+) + NADPH = NADH + NADP(+). Functionally, conversion of NADPH, generated by peripheral catabolic pathways, to NADH, which can enter the respiratory chain for energy generation. The protein is Soluble pyridine nucleotide transhydrogenase of Erwinia tasmaniensis (strain DSM 17950 / CFBP 7177 / CIP 109463 / NCPPB 4357 / Et1/99).